Consider the following 162-residue polypeptide: Transcriptional repressor NrdR (162 aa).

Residues 1 to 21 are disordered; that stretch reads MNCPDCGDEQTRVIDTETSAD. A zinc finger lies at 3 to 34; sequence CPDCGDEQTRVIDTETSADGTSVRRRRECQRC. In terms of domain architecture, ATP-cone spans 49 to 139; the sequence is LQVKKRNGTI…VYKAFSEPQE (91 aa).

Belongs to the NrdR family. Requires Zn(2+) as cofactor.

Its function is as follows. Negatively regulates transcription of bacterial ribonucleotide reductase nrd genes and operons by binding to NrdR-boxes. The protein is Transcriptional repressor NrdR of Halorubrum lacusprofundi (strain ATCC 49239 / DSM 5036 / JCM 8891 / ACAM 34).